A 147-amino-acid chain; its full sequence is Hemoglobin subunit delta (147 aa).

At valine 2 the chain carries N-acetylalanine; in variant Niigata. Residues 3–147 form the Globin domain; sequence HLTPEEKTAV…VANALAHKYH (145 aa). The residue at position 51 (serine 51) is a Phosphoserine. Positions 64 and 93 each coordinate heme b.

It belongs to the globin family. In terms of assembly, heterotetramer of two alpha chains and two delta chains in adult hemoglobin A2 (HbA2). HbA2 represents less than 3.5% of adult hemoglobin. As to expression, red blood cells.

Functionally, involved in oxygen transport from the lung to the various peripheral tissues. The chain is Hemoglobin subunit delta (HBD) from Homo sapiens (Human).